Here is a 349-residue protein sequence, read N- to C-terminus: Ribosomal RNA small subunit methyltransferase H 2 (349 aa).

Residues 80 to 82 (GGH), D100, F130, D149, and Q156 each bind S-adenosyl-L-methionine.

Belongs to the methyltransferase superfamily. RsmH family.

The protein localises to the cytoplasm. It carries out the reaction cytidine(1402) in 16S rRNA + S-adenosyl-L-methionine = N(4)-methylcytidine(1402) in 16S rRNA + S-adenosyl-L-homocysteine + H(+). Functionally, specifically methylates the N4 position of cytidine in position 1402 (C1402) of 16S rRNA. This is Ribosomal RNA small subunit methyltransferase H 2 from Alkaliphilus metalliredigens (strain QYMF).